The chain runs to 194 residues: Naphthalene 1,2-dioxygenase system, small oxygenase component (194 aa).

The protein belongs to the bacterial ring-hydroxylating dioxygenase beta subunit family. The naphthalene dioxygenase (NDO) multicomponent enzyme system is composed of an electron transfer component and a dioxygenase component (iron sulfur protein (ISP)). The electron transfer component is composed of a ferredoxin reductase (NagAa) and a ferredoxin (NagAb), and the dioxygenase component is formed by a large alpha subunit (NagAc) and a small beta subunit (NagAd).

The protein operates within aromatic compound metabolism; naphthalene degradation. Its function is as follows. Component of the naphthalene dioxygenase (NDO) multicomponent enzyme system which catalyzes the incorporation of both atoms of molecular oxygen into naphthalene to form cis-(1R,2S)-dihydroxy-1,2-dihydronaphthalene. Also able to use styrene as substrate. The beta subunit seems to have a structural role in the holoenzyme. This Ralstonia sp protein is Naphthalene 1,2-dioxygenase system, small oxygenase component.